The chain runs to 314 residues: Regulator of microtubule dynamics protein 1 (314 aa).

An N6-succinyllysine modification is found at K165. 2 TPR repeats span residues 168 to 204 (AICLSDVGDYEGIKAKIANAYIIKEHFEKAIELNPKD) and 222 to 258 (PWYQRRIAKMLFATPPSSTYEKALGYFHRAEQVDPNF).

This sequence belongs to the RMDN family. In terms of assembly, interacts with microtubules.

The protein localises to the cytoplasm. Its subcellular location is the cytoskeleton. It localises to the spindle. It is found in the spindle pole. The protein is Regulator of microtubule dynamics protein 1 (RMDN1) of Homo sapiens (Human).